The following is a 421-amino-acid chain: UDP-N-acetylglucosamine 1-carboxyvinyltransferase (421 aa).

K22–N23 is a phosphoenolpyruvate binding site. R92 contributes to the UDP-N-acetyl-alpha-D-glucosamine binding site. C116 acts as the Proton donor in catalysis. C116 bears the 2-(S-cysteinyl)pyruvic acid O-phosphothioketal mark. The UDP-N-acetyl-alpha-D-glucosamine site is built by D306 and V328.

Belongs to the EPSP synthase family. MurA subfamily.

The protein localises to the cytoplasm. The enzyme catalyses phosphoenolpyruvate + UDP-N-acetyl-alpha-D-glucosamine = UDP-N-acetyl-3-O-(1-carboxyvinyl)-alpha-D-glucosamine + phosphate. The protein operates within cell wall biogenesis; peptidoglycan biosynthesis. Cell wall formation. Adds enolpyruvyl to UDP-N-acetylglucosamine. In Thermotoga petrophila (strain ATCC BAA-488 / DSM 13995 / JCM 10881 / RKU-1), this protein is UDP-N-acetylglucosamine 1-carboxyvinyltransferase.